A 519-amino-acid polypeptide reads, in one-letter code: Xylose import ATP-binding protein XylG (519 aa).

ABC transporter domains follow at residues 6-245 (LTMR…VGRE) and 262-507 (LEAR…LTPA). 38–45 (GENGAGKS) is an ATP binding site.

It belongs to the ABC transporter superfamily. Xylose importer (TC 3.A.1.2.4) family. The complex is composed of two ATP-binding proteins (XylG), two transmembrane proteins (XylH) and a solute-binding protein (XylF).

The protein resides in the cell inner membrane. It carries out the reaction D-xylose(out) + ATP + H2O = D-xylose(in) + ADP + phosphate + H(+). Its function is as follows. Part of the ABC transporter complex XylFGH involved in xylose import. Responsible for energy coupling to the transport system. This chain is Xylose import ATP-binding protein XylG, found in Burkholderia ambifaria (strain ATCC BAA-244 / DSM 16087 / CCUG 44356 / LMG 19182 / AMMD) (Burkholderia cepacia (strain AMMD)).